The primary structure comprises 367 residues: UDP-N-acetylglucosamine--N-acetylmuramyl-(pentapeptide) pyrophosphoryl-undecaprenol N-acetylglucosamine transferase (367 aa).

UDP-N-acetyl-alpha-D-glucosamine is bound by residues 18–20 (TGG), Asn130, Arg170, Ser196, Ile252, 271–276 (ALTVSE), and Gln297.

The protein belongs to the glycosyltransferase 28 family. MurG subfamily.

The protein localises to the cell inner membrane. It carries out the reaction di-trans,octa-cis-undecaprenyl diphospho-N-acetyl-alpha-D-muramoyl-L-alanyl-D-glutamyl-meso-2,6-diaminopimeloyl-D-alanyl-D-alanine + UDP-N-acetyl-alpha-D-glucosamine = di-trans,octa-cis-undecaprenyl diphospho-[N-acetyl-alpha-D-glucosaminyl-(1-&gt;4)]-N-acetyl-alpha-D-muramoyl-L-alanyl-D-glutamyl-meso-2,6-diaminopimeloyl-D-alanyl-D-alanine + UDP + H(+). Its pathway is cell wall biogenesis; peptidoglycan biosynthesis. Cell wall formation. Catalyzes the transfer of a GlcNAc subunit on undecaprenyl-pyrophosphoryl-MurNAc-pentapeptide (lipid intermediate I) to form undecaprenyl-pyrophosphoryl-MurNAc-(pentapeptide)GlcNAc (lipid intermediate II). This Shewanella frigidimarina (strain NCIMB 400) protein is UDP-N-acetylglucosamine--N-acetylmuramyl-(pentapeptide) pyrophosphoryl-undecaprenol N-acetylglucosamine transferase.